A 304-amino-acid polypeptide reads, in one-letter code: Small glutamine-rich tetratricopeptide repeat-containing protein beta (304 aa).

TPR repeat units lie at residues 15-49, 85-118, 120-152, and 153-186; these read LREQ…SPED, ADQL…DPNN, VYYC…DSKY, and SKAY…DPEN. Lys131 is modified (N6-acetyllysine). Ser293, Ser295, and Ser297 each carry phosphoserine.

This sequence belongs to the SGT family. In terms of assembly, homooligomerize. Expressed specifically in brain.

Its function is as follows. Co-chaperone that binds directly to HSC70 and HSP70 and regulates their ATPase activity. This chain is Small glutamine-rich tetratricopeptide repeat-containing protein beta (Sgtb), found in Rattus norvegicus (Rat).